Consider the following 314-residue polypeptide: Serine acetyltransferase 1, chloroplastic (314 aa).

Belongs to the transferase hexapeptide repeat family. In terms of assembly, homomultimer. Interacts with OASA1 and CYP20-3. Component of the cysteine synthase complex (CSC) composed of two OAS-TL dimers and one SAT hexamer. In terms of tissue distribution, mostly expressed in leaves. Localized in cortex, trichomes and vascular tissues, particularly in phloem.

The protein localises to the plastid. It is found in the chloroplast. It localises to the cytoplasm. It carries out the reaction L-serine + acetyl-CoA = O-acetyl-L-serine + CoA. Its pathway is amino-acid biosynthesis; L-cysteine biosynthesis; L-cysteine from L-serine: step 1/2. In terms of biological role, serine acetyltransferase which catalyzes the formation of O-acetyl-L-serine from acetyl-CoA and L-serine. Also displays O-acetylserine (thio1)-lyase activity in vitro. May be involved in detoxification process by mediating the production of glutathione. The chain is Serine acetyltransferase 1, chloroplastic (SAT1) from Arabidopsis thaliana (Mouse-ear cress).